A 374-amino-acid chain; its full sequence is Translocating chain-associated membrane protein 1 (374 aa).

Topologically, residues 2-29 (AIRKKSTKSPPVLSHEFILQNHADIVSC) are cytoplasmic. Residues 30–50 (VAMVFLLGLMFEITAKASIIF) traverse the membrane as a helical segment. At 51–76 (VTLQYNVTLPATEEQATESTSLYYYG) the chain is on the lumenal side. Asn-56 is a glycosylation site (N-linked (GlcNAc...) asparagine). A helical transmembrane segment spans residues 77 to 97 (IKDLATVFFYMLVAIIIHAII). The Cytoplasmic portion of the chain corresponds to 98-121 (QEYVLDKINRRMHFSKTKHSKFNE). Residues 117–326 (SKFNESGQLS…NFQLRRWREH (210 aa)) enclose the TLC domain. The chain crosses the membrane as a helical span at residues 122 to 142 (SGQLSAFYLFSCIWGTFILIS). Over 143–159 (ENYISDPTILWRAYPHN) the chain is Lumenal. Residues 160–180 (LMTFQMKFFYIAQLAYWFHAF) form a helical membrane-spanning segment. Residues 181–192 (PELYFQKTKKED) are Cytoplasmic-facing. Residues 193–213 (IPRQLVYIGLYLFHIAGAYLL) form a helical membrane-spanning segment. Topologically, residues 214-217 (NLNH) are lumenal. The chain crosses the membrane as a helical span at residues 218 to 238 (LGLVLLVLHYFVEFLFHISRL). Residues 239-251 (FYFSDEKYQKGFS) are Cytoplasmic-facing. A helical membrane pass occupies residues 252–272 (LWAVLFVLGRLLTLILSVLTV). At 273–297 (GFGLARAENQKLDFSAGNFNVLAVR) the chain is on the lumenal side. A helical transmembrane segment spans residues 298–318 (IAVLASICITQAFMMWKFINF). The Cytoplasmic segment spans residues 319 to 374 (QLRRWREHSTFQAPVVKKKPTVTKGRSSRKGTENGVNGTVTSNGADSPRNRKEKSS). Over residues 334–347 (VKKKPTVTKGRSSR) the composition is skewed to basic residues. Positions 334-374 (VKKKPTVTKGRSSRKGTENGVNGTVTSNGADSPRNRKEKSS) are disordered. Residues 352 to 363 (NGVNGTVTSNGA) show a composition bias toward polar residues. Ser-365 is modified (phosphoserine).

This sequence belongs to the TRAM family. Interacts with SEC61B. May interact with Derlin-1/DERL1. In terms of processing, N-glycosylated.

The protein localises to the endoplasmic reticulum membrane. Functionally, involved in the translocation of nascent protein chains into or through the endoplasmic reticulum (ER) membrane by facilitating the proper chain positioning at the SEC61 channel. Regulates the exposure of nascent secretory protein chain to the cytosol during translocation into the ER. May affect the phospholipid bilayer in the vicinity of the lateral gate of the SEC61 channel, thereby facilitating ER protein transport. Intimately associates with transmembrane (TM) domain of nascent membrane proteins during the entire integration process into the ER membrane. Associates with the second TM domain of G-protein-coupled receptor opsin/OPSD nascent chain in the ER membrane, which may facilitate its integration into the membrane. Under conditions of ER stress, participates in the disposal of misfolded ER membrane proteins during the unfolded protein response (UPR), an integrated stress response (ISR) pathway, by selectively retrotranslocating misfolded ER-membrane proteins from the ER into the cytosol where they are ubiquitinated and degraded by the proteasome. The chain is Translocating chain-associated membrane protein 1 (TRAM1) from Canis lupus familiaris (Dog).